The following is a 316-amino-acid chain: Ribose-phosphate pyrophosphokinase (316 aa).

ATP contacts are provided by residues 39 to 41 (DGE) and 98 to 99 (RQ). Mg(2+) contacts are provided by histidine 133 and aspartate 172. Lysine 195 is a catalytic residue. Residues arginine 197, aspartate 221, and 225 to 229 (DTANT) each bind D-ribose 5-phosphate.

Belongs to the ribose-phosphate pyrophosphokinase family. Class I subfamily. As to quaternary structure, homohexamer. Mg(2+) serves as cofactor.

It localises to the cytoplasm. It carries out the reaction D-ribose 5-phosphate + ATP = 5-phospho-alpha-D-ribose 1-diphosphate + AMP + H(+). The protein operates within metabolic intermediate biosynthesis; 5-phospho-alpha-D-ribose 1-diphosphate biosynthesis; 5-phospho-alpha-D-ribose 1-diphosphate from D-ribose 5-phosphate (route I): step 1/1. Functionally, involved in the biosynthesis of the central metabolite phospho-alpha-D-ribosyl-1-pyrophosphate (PRPP) via the transfer of pyrophosphoryl group from ATP to 1-hydroxyl of ribose-5-phosphate (Rib-5-P). This Nitrosomonas europaea (strain ATCC 19718 / CIP 103999 / KCTC 2705 / NBRC 14298) protein is Ribose-phosphate pyrophosphokinase.